Consider the following 116-residue polypeptide: Iron-sulfur cluster insertion protein ErpA (116 aa).

Iron-sulfur cluster is bound by residues C44, C108, and C110.

The protein belongs to the HesB/IscA family. As to quaternary structure, homodimer. The cofactor is iron-sulfur cluster.

Its function is as follows. Required for insertion of 4Fe-4S clusters for at least IspG. In Shewanella pealeana (strain ATCC 700345 / ANG-SQ1), this protein is Iron-sulfur cluster insertion protein ErpA.